A 617-amino-acid polypeptide reads, in one-letter code: Leucine aminopeptidase 2 (617 aa).

Residues 139–141 (QCQ) and 271–276 (PYGGME) contribute to the a peptide site. H300 is a binding site for Zn(2+). E301 functions as the Proton acceptor in the catalytic mechanism. Residues H304 and E323 each contribute to the Zn(2+) site. The active-site Proton donor is the Y388.

It belongs to the peptidase M1 family. It depends on Zn(2+) as a cofactor.

It localises to the cytoplasm. The protein localises to the nucleus. It carries out the reaction an epoxide + H2O = an ethanediol. Functionally, aminopeptidase that preferentially cleaves di- and tripeptides. Also has low epoxide hydrolase activity (in vitro). Can hydrolyze the epoxide leukotriene LTA(4) but it forms preferentially 5,6-dihydroxy-7,9,11,14-eicosatetraenoic acid rather than the cytokine leukotriene B(4) as the product compared to the homologous mammalian enzyme (in vitro). The chain is Leucine aminopeptidase 2 from Neosartorya fischeri (strain ATCC 1020 / DSM 3700 / CBS 544.65 / FGSC A1164 / JCM 1740 / NRRL 181 / WB 181) (Aspergillus fischerianus).